Here is a 416-residue protein sequence, read N- to C-terminus: Glutamyl-tRNA reductase (416 aa).

Residues 49 to 52 (TCNR), Ser-105, 110 to 112 (EPQ), and Gln-116 each bind substrate. Cys-50 (nucleophile) is an active-site residue. 185-190 (GAGETI) contacts NADP(+).

Belongs to the glutamyl-tRNA reductase family. As to quaternary structure, homodimer.

The catalysed reaction is (S)-4-amino-5-oxopentanoate + tRNA(Glu) + NADP(+) = L-glutamyl-tRNA(Glu) + NADPH + H(+). It functions in the pathway porphyrin-containing compound metabolism; protoporphyrin-IX biosynthesis; 5-aminolevulinate from L-glutamyl-tRNA(Glu): step 1/2. In terms of biological role, catalyzes the NADPH-dependent reduction of glutamyl-tRNA(Glu) to glutamate 1-semialdehyde (GSA). The protein is Glutamyl-tRNA reductase of Shewanella oneidensis (strain ATCC 700550 / JCM 31522 / CIP 106686 / LMG 19005 / NCIMB 14063 / MR-1).